Here is a 424-residue protein sequence, read N- to C-terminus: Putative chloroquine resistance transporter (424 aa).

The Cytoplasmic portion of the chain corresponds to methionine 1 to asparagine 56. Residues valine 57–alanine 77 traverse the membrane as a helical segment. The Vacuolar portion of the chain corresponds to lysine 78–serine 88. Asparagine 86 carries an N-linked (GlcNAc...) asparagine glycan. The helical transmembrane segment at phenylalanine 89 to isoleucine 109 threads the bilayer. Over tyrosine 110–asparagine 125 the chain is Cytoplasmic. A helical transmembrane segment spans residues phenylalanine 126–isoleucine 146. Over glycine 147–glutamine 156 the chain is Vacuolar. A helical membrane pass occupies residues serine 157–tyrosine 177. Over arginine 178 to histidine 180 the chain is Cytoplasmic. Residues leucine 181 to leucine 201 traverse the membrane as a helical segment. At serine 202 to asparagine 209 the chain is on the vacuolar side. Residues serine 210–threonine 230 traverse the membrane as a helical segment. The Cytoplasmic portion of the chain corresponds to arginine 231 to methionine 248. The chain crosses the membrane as a helical span at residues valine 249–leucine 269. Over lysine 270–lysine 317 the chain is Vacuolar. 2 cysteine pairs are disulfide-bonded: cysteine 289–cysteine 312 and cysteine 301–cysteine 309. The chain crosses the membrane as a helical span at residues threonine 318–aspartate 338. At lysine 339–threonine 346 the chain is on the cytoplasmic side. Residues isoleucine 347–glycine 367 form a helical membrane-spanning segment. Residues aspartate 368–aspartate 377 are Vacuolar-facing. The helical transmembrane segment at phenylalanine 378–leucine 398 threads the bilayer. The Cytoplasmic segment spans residues glutamate 399 to alanine 424.

Belongs to the CRT-like transporter family.

Its subcellular location is the vacuole membrane. Its function is as follows. Nutrient transporter. Involved in maintaining the osmotic homeostasis of the digestive vacuole. This chain is Putative chloroquine resistance transporter, found in Plasmodium yoelii yoelii.